Reading from the N-terminus, the 416-residue chain is 2-amino-3-ketobutyrate coenzyme A ligase, mitochondrial (416 aa).

Residues 1-18 constitute a mitochondrion transit peptide; that stretch reads MWASFMWHGALSPGRRAH. Lys42 bears the N6-acetyllysine; alternate mark. The residue at position 42 (Lys42) is an N6-succinyllysine; alternate. 131-132 provides a ligand contact to pyridoxal 5'-phosphate; the sequence is CF. Residue His156 coordinates substrate. At Lys184 the chain carries N6-acetyllysine; alternate. Residue Lys184 is modified to N6-succinyllysine; alternate. Pyridoxal 5'-phosphate contacts are provided by residues Ser203, 259–262, and 292–293; these read TLGK and SN. Lys262 is modified (N6-(pyridoxal phosphate)lysine). 2 positions are modified to N6-succinyllysine: Lys323 and Lys365. N6-acetyllysine; alternate is present on Lys380. Lys380 bears the N6-succinyllysine; alternate mark. Arg386 contributes to the substrate binding site.

The protein belongs to the class-II pyridoxal-phosphate-dependent aminotransferase family. The cofactor is pyridoxal 5'-phosphate.

It is found in the mitochondrion. Its subcellular location is the nucleus. It carries out the reaction glycine + acetyl-CoA = (2S)-2-amino-3-oxobutanoate + CoA. It participates in amino-acid degradation; L-threonine degradation via oxydo-reductase pathway; glycine from L-threonine: step 2/2. In terms of biological role, pyridoxal phosphate (PLP) dependent enzyme, which catalyzes the cleavage of 2-amino-3-oxobutanoate to glycine and acetyl-CoA. Catalyzes the second reaction step on the main metabolic degradation pathway for L-threonine. The protein is 2-amino-3-ketobutyrate coenzyme A ligase, mitochondrial (Gcat) of Mus musculus (Mouse).